Consider the following 304-residue polypeptide: Oxidoreductase calM (304 aa).

Residues Ile-26, Thr-45, Asp-68, and Asn-98 each coordinate NADP(+). Residue Ser-152 is the Proton donor of the active site. NADP(+)-binding residues include Tyr-166, Lys-170, Val-200, and Thr-202. Residue Tyr-166 is the Proton acceptor of the active site. The active-site Lowers pKa of active site Tyr is Lys-170.

Belongs to the short-chain dehydrogenases/reductases (SDR) family.

The protein operates within secondary metabolite biosynthesis. In terms of biological role, oxidoreductase; part of the gene cluster that mediates the biosynthesis of calbistrin A and related compounds. Calbistrin A is a secondary metabolite with an interesting structure that was recently found to have bioactivity against leukemia cells. It consists of two polyketides linked by an ester bond: a bicyclic decalin containing polyketide and a linear 12 carbon dioic acid structure. The polyketide synthase calA is probably responsible for forming the decalin moiety. Because calA lacks a designated enoylreductase (ER) domain, the required activity is provided by the trans-enoyl reductase calK. Following release from the PKS, calF then probably catalyzes the oxidation and the subsequent Diels Alder cycloisomerization that lead to the formation of the decalin moiety. The decalin polyketide backbone includes two C-methyl groups, at C7 and C11 in backbone, of which the C7 position is probably methylated by the methyltransferase domain of calA. A candidate for adding the methyl group at C11, if not done by CalA, is the cluster methyltransferase calH. Several additional tailoring enzymes within the cluster could be involved in the modification of the decalin polyketide product. Those include the 3 cytochrome P450 monooxygenases CalE, CalG and CalL, of which one might be responsible for the introduction of the extra hydroxyl group attached to the backbone of the decalin moiety, at position C9 in the backbone, that allows for attachment of the linear moiety. One tailoring enzyme activity that is expected to be involved in biosynthesis of calbistrin is an acyltransferase for connecting the two polyketide synthase products, and which could be performed by the cluster acyltransferase calJ. The enzyme responsible for the biosynthesis of the linear moiety, probably a second PKS, has not been identified yet. The protein is Oxidoreductase calM of Penicillium decumbens.